A 361-amino-acid polypeptide reads, in one-letter code: Neuronal-specific septin-3 (361 aa).

A disordered region spans residues 1-46 (MSEIVPPEVRPKPAVPAKPSHVAPPSSAPFVPSPQGTGGEGQGSGR). Low complexity predominate over residues 15 to 34 (VPAKPSHVAPPSSAPFVPSP). Positions 36–46 (GTGGEGQGSGR) are enriched in gly residues. One can recognise a Septin-type G domain in the interval 70–342 (AGFDFNIMVV…ETYRAKRLND (273 aa)). Residues 80–87 (GQSGLGKS) form a G1 motif region. GTP is bound by residues 80–87 (GQSGLGKS) and Thr114. The interval 137-140 (DTPG) is G3 motif. The interval 219 to 222 (AKSD) is G4 motif. GTP contacts are provided by residues 220 to 228 (KSDTLTPEE), Gly276, and Arg291. Positions 341-361 (NDNGGLHPISSSGHDTQESNL) are disordered. Polar residues predominate over residues 349–361 (ISSSGHDTQESNL).

It belongs to the TRAFAC class TrmE-Era-EngA-EngB-Septin-like GTPase superfamily. Septin GTPase family.

The protein resides in the cytoplasm. Functionally, may be involved in cytokinesis. The protein is Neuronal-specific septin-3 of Danio rerio (Zebrafish).